The chain runs to 66 residues: MRRALFIAGQTYLWLNLTHLLLIFSWSSTMAFSQSRRLLTPTVPCPTLLGIDFLILVLRHFDEIFI.

2 helical membrane-spanning segments follow: residues 4-24 (ALFI…LLIF) and 38-58 (LLTP…ILVL).

The protein resides in the membrane. This is an uncharacterized protein from Saccharomyces cerevisiae (strain ATCC 204508 / S288c) (Baker's yeast).